The sequence spans 191 residues: Superoxide dismutase [Mn/Fe] (191 aa).

H27, H74, D157, and H161 together coordinate Fe(3+). Residues H27, H74, D157, and H161 each contribute to the Mn(2+) site.

The protein belongs to the iron/manganese superoxide dismutase family. Homodimer. Mn(2+) is required as a cofactor. The cofactor is Fe(3+).

It catalyses the reaction 2 superoxide + 2 H(+) = H2O2 + O2. With respect to regulation, inhibited by hydrogen peroxide. Its function is as follows. Destroys superoxide anion radicals which are normally produced within the cells and which are toxic to biological systems. Catalyzes the dismutation of superoxide anion radicals into O2 and H2O2 by successive reduction and oxidation of the transition metal ion at the active site. This chain is Superoxide dismutase [Mn/Fe] (sodB), found in Porphyromonas gingivalis (strain ATCC BAA-308 / W83).